Consider the following 432-residue polypeptide: Enolase (432 aa).

Glutamine 163 contacts (2R)-2-phosphoglycerate. The active-site Proton donor is the glutamate 205. Positions 242, 285, and 312 each coordinate Mg(2+). (2R)-2-phosphoglycerate is bound by residues lysine 337, arginine 366, serine 367, and lysine 388. Lysine 337 (proton acceptor) is an active-site residue.

It belongs to the enolase family. Mg(2+) serves as cofactor.

It is found in the cytoplasm. The protein resides in the secreted. Its subcellular location is the cell surface. The enzyme catalyses (2R)-2-phosphoglycerate = phosphoenolpyruvate + H2O. It participates in carbohydrate degradation; glycolysis; pyruvate from D-glyceraldehyde 3-phosphate: step 4/5. Catalyzes the reversible conversion of 2-phosphoglycerate (2-PG) into phosphoenolpyruvate (PEP). It is essential for the degradation of carbohydrates via glycolysis. The chain is Enolase from Bifidobacterium adolescentis (strain ATCC 15703 / DSM 20083 / NCTC 11814 / E194a).